A 526-amino-acid polypeptide reads, in one-letter code: D-arabinono-1,4-lactone oxidase (526 aa).

In terms of domain architecture, FAD-binding PCMH-type spans 19-193 (YSAKPERYFQ…VSATIRVVPG (175 aa)). His56 is modified (pros-8alpha-FAD histidine).

Belongs to the oxygen-dependent FAD-linked oxidoreductase family. In terms of assembly, monomer. The cofactor is FAD. In terms of processing, the N-terminus is blocked.

It is found in the mitochondrion membrane. The catalysed reaction is D-arabinono-1,4-lactone + O2 = dehydro-D-arabinono-1,4-lactone + H2O2 + H(+). It participates in cofactor biosynthesis; D-erythroascorbate biosynthesis; dehydro-D-arabinono-1,4-lactone from D-arabinose: step 2/2. Functionally, can oxidize L-gulono-1,4-lactone as well as D-arabinono-1,4-lactone and L-galactono-1,4-lactone. This Saccharomyces cerevisiae (strain ATCC 204508 / S288c) (Baker's yeast) protein is D-arabinono-1,4-lactone oxidase (ALO1).